The following is a 142-amino-acid chain: Taurine up-regulated 1 protein (142 aa).

Residues Met-1–Ala-40 form the signal peptide. Residues Arg-41–Gly-123 lie on the Extracellular side of the membrane. Residues Ala-124–Met-140 traverse the membrane as a helical segment. Residues Pro-141 to Pro-142 lie on the Cytoplasmic side of the membrane.

In terms of tissue distribution, widely expressed in the adult with highest levels in placenta and testis. Also expressed in a number of embryonic tissues at multiple embryonic stages.

Its subcellular location is the nucleus membrane. It is found in the mitochondrion membrane. It localises to the cytoplasm. The polypeptide is Taurine up-regulated 1 protein (Mus musculus (Mouse)).